The primary structure comprises 289 residues: Diaminopimelate epimerase (289 aa).

Residues N13, Q47, and N67 each coordinate substrate. Residue C76 is the Proton donor of the active site. Residues 77–78 (GN), N167, N200, and 218–219 (ER) each bind substrate. C227 acts as the Proton acceptor in catalysis. 228–229 (GT) is a substrate binding site.

This sequence belongs to the diaminopimelate epimerase family. In terms of assembly, homodimer.

The protein localises to the cytoplasm. The enzyme catalyses (2S,6S)-2,6-diaminopimelate = meso-2,6-diaminopimelate. The protein operates within amino-acid biosynthesis; L-lysine biosynthesis via DAP pathway; DL-2,6-diaminopimelate from LL-2,6-diaminopimelate: step 1/1. Catalyzes the stereoinversion of LL-2,6-diaminopimelate (L,L-DAP) to meso-diaminopimelate (meso-DAP), a precursor of L-lysine and an essential component of the bacterial peptidoglycan. The polypeptide is Diaminopimelate epimerase (Burkholderia vietnamiensis (strain G4 / LMG 22486) (Burkholderia cepacia (strain R1808))).